Reading from the N-terminus, the 303-residue chain is Polyisoprenyl-teichoic acid--peptidoglycan teichoic acid transferase TagU (303 aa).

Topologically, residues 1–4 (MKKK) are cytoplasmic. Residues 5 to 25 (ILFWVLGILGVLIIGGGIYAY) form a helical; Signal-anchor for type II membrane protein membrane-spanning segment. Over 26–303 (NVYSSVSNTL…KLRTHLEVTK (278 aa)) the chain is Extracellular.

The protein belongs to the LytR/CpsA/Psr (LCP) family.

It is found in the cell membrane. The protein operates within cell wall biogenesis. In terms of biological role, may catalyze the final step in cell wall teichoic acid biosynthesis, the transfer of the anionic cell wall polymers (APs) from their lipid-linked precursor to the cell wall peptidoglycan (PG). This is Polyisoprenyl-teichoic acid--peptidoglycan teichoic acid transferase TagU from Bacillus cereus (strain ZK / E33L).